Reading from the N-terminus, the 342-residue chain is Isopentenyl-diphosphate delta-isomerase (342 aa).

11 to 12 serves as a coordination point for substrate; it reads RK. Residues S68, 69–71, S99, and N127 each bind FMN; that span reads SMT. 99–101 lines the substrate pocket; sequence SMR. Residue E163 coordinates Mg(2+). FMN-binding positions include K194, T224, and 295–296; that span reads AG.

Belongs to the IPP isomerase type 2 family. Homooctamer. Dimer of tetramers. FMN serves as cofactor. The cofactor is NADPH. Requires Mg(2+) as cofactor.

The protein localises to the cytoplasm. It catalyses the reaction isopentenyl diphosphate = dimethylallyl diphosphate. Its function is as follows. Involved in the biosynthesis of isoprenoids. Catalyzes the 1,3-allylic rearrangement of the homoallylic substrate isopentenyl (IPP) to its allylic isomer, dimethylallyl diphosphate (DMAPP). The protein is Isopentenyl-diphosphate delta-isomerase of Rickettsia typhi (strain ATCC VR-144 / Wilmington).